Reading from the N-terminus, the 462-residue chain is MKLYDTFSAAKRVFDPIDSACVKIYACGPTVYDLAHIGNARSAVVYDVLFRLLRELYPEVIYVRNITDVDDKIINAAAETGQNIGDFTERYIRYFHEDMDALNCLSPTVEPRATAEIDTMLQLISRLVESGHAYVKGGSVYFSISSHRHYGRLSGRKIDEMISGNRVSIDAEKLHPGDFVLWKPATEQDIKLGAAWESPWGGGRPGWHIECSAMSYRYLGESFDIHGGGADLMFPHHENELAQNMCAFSGSEYARYWVHNGFLTVNAGEKMSKSLGNVITVRGLRNSGIEGAVIRYVFLCTHYRKPLDWNEKAIFDAQSALSKMRRSCEEFTSEELNSDIEAVGVHNMLLEALKDDMNTPMAIAALHALVGEINKTTDFKERLKLARVLNRSAKLMGITDGFAGKSAEEAVDVDKIQELLERRREARNGGNYSLADEIRDQLHSMGIVIKDDKDGVTRWSRA.

Cysteine 27 is a binding site for Zn(2+). A 'HIGH' region motif is present at residues 29 to 39 (PTVYDLAHIGN). Zn(2+)-binding residues include cysteine 211, histidine 236, and glutamate 240. Residues 270 to 274 (KMSKS) carry the 'KMSKS' region motif. Lysine 273 is an ATP binding site.

Belongs to the class-I aminoacyl-tRNA synthetase family. As to quaternary structure, monomer. The cofactor is Zn(2+).

It is found in the cytoplasm. It carries out the reaction tRNA(Cys) + L-cysteine + ATP = L-cysteinyl-tRNA(Cys) + AMP + diphosphate. The protein is Cysteine--tRNA ligase of Anaplasma phagocytophilum (strain HZ).